The chain runs to 169 residues: Ribosome maturation factor RimM (169 aa).

Residues 97 to 169 (NDEAYFTDLI…KIVVDWEYDY (73 aa)) form the PRC barrel domain.

Belongs to the RimM family. In terms of assembly, binds ribosomal protein uS19.

The protein localises to the cytoplasm. Its function is as follows. An accessory protein needed during the final step in the assembly of 30S ribosomal subunit, possibly for assembly of the head region. Essential for efficient processing of 16S rRNA. May be needed both before and after RbfA during the maturation of 16S rRNA. It has affinity for free ribosomal 30S subunits but not for 70S ribosomes. The protein is Ribosome maturation factor RimM of Francisella philomiragia subsp. philomiragia (strain ATCC 25017 / CCUG 19701 / FSC 153 / O#319-036).